We begin with the raw amino-acid sequence, 190 residues long: Probable chorismate pyruvate-lyase (190 aa).

Substrate is bound by residues Arg74, Leu112, and Glu173.

It belongs to the UbiC family.

Its subcellular location is the cytoplasm. It carries out the reaction chorismate = 4-hydroxybenzoate + pyruvate. The protein operates within cofactor biosynthesis; ubiquinone biosynthesis. Its function is as follows. Removes the pyruvyl group from chorismate, with concomitant aromatization of the ring, to provide 4-hydroxybenzoate (4HB) for the ubiquinone pathway. The sequence is that of Probable chorismate pyruvate-lyase from Bordetella bronchiseptica (strain ATCC BAA-588 / NCTC 13252 / RB50) (Alcaligenes bronchisepticus).